The chain runs to 955 residues: Anoctamin-4 (955 aa).

Over 1–352 the chain is Cytoplasmic; it reads MEASSSGITN…FGEKIGLYFA (352 aa). Residues 73–97 are disordered; it reads KDDDSLLHPGNLTSTSEDTSRLEAG. A helical transmembrane segment spans residues 353-373; it reads WLGWYTGMLFPAAFIGLFVFL. Residues 374 to 424 lie on the Extracellular side of the membrane; that stretch reads YGVTTLDHCQVSKEVCQATDIIMCPVCDKYCPFMRLSDSCVYAKVTHLFDN. Residues 425–445 form a helical membrane-spanning segment; it reads GATVFFAVFMAVWATVFLEFW. Topologically, residues 446 to 505 are cytoplasmic; that stretch reads KRRRAVIAYDWDLIDWEEEEEEIRPQFEAKYSKKERMNPISGKPEPYQAFTDKCSRLIVS. A helical membrane pass occupies residues 506–526; sequence ASGIFFMICVVIAAVFGIVIY. The Extracellular segment spans residues 527-547; the sequence is RVVTVSTFAAFKWALIRNNSQ. The N-linked (GlcNAc...) asparagine glycan is linked to N544. The chain crosses the membrane as a helical span at residues 548–568; it reads VATTGTAVCINFCIIMLLNVL. At 569–595 the chain is on the cytoplasmic side; that stretch reads YEKVALLLTNLEQPRTESEWENSFTLK. A helical membrane pass occupies residues 596 to 616; that stretch reads MFLFQFVNLNSSTFYIAFFLG. Residues 617-715 are Extracellular-facing; that stretch reads RFTGHPGAYL…AYGLFDEYLE (99 aa). The chain crosses the membrane as a helical span at residues 716–736; the sequence is MILQFGFTTIFVAAFPLAPLL. At 737 to 768 the chain is on the cytoplasmic side; the sequence is ALLNNIIEIRLDAYKFVTQWRRPLASRAKDIG. The chain crosses the membrane as a helical span at residues 769 to 789; it reads IWYGILEGIGILSVITNAFVI. Topologically, residues 790–885 are extracellular; it reads AITSDFIPRL…QFWHVLAARL (96 aa). N824 and N837 each carry an N-linked (GlcNAc...) asparagine glycan. A helical transmembrane segment spans residues 886 to 906; the sequence is AFIIVFEHLVFCIKHLISYLI. Residues 907 to 955 are Cytoplasmic-facing; the sequence is PDLPKDLRDRMRREKYLIQEMMYEAELERLQKERKERKKNGKAHHNEWP.

This sequence belongs to the anoctamin family. As to expression, predominantly expressed in neuronal tissues. Expressed at low levels in ovary, uterus, heart and brain.

It localises to the cell membrane. The catalysed reaction is a 1,2-diacyl-sn-glycero-3-phospho-L-serine(in) = a 1,2-diacyl-sn-glycero-3-phospho-L-serine(out). It catalyses the reaction a beta-D-galactosyl-(1&lt;-&gt;1')-N-acylsphing-4-enine(out) = a beta-D-galactosyl-(1&lt;-&gt;1')-N-acylsphing-4-enine(in). It carries out the reaction a 1,2-diacyl-sn-glycero-3-phosphocholine(in) = a 1,2-diacyl-sn-glycero-3-phosphocholine(out). Has calcium-dependent phospholipid scramblase activity; scrambles phosphatidylserine, phosphatidylcholine and galactosylceramide. Does not exhibit calcium-activated chloride channel (CaCC) activity. The sequence is that of Anoctamin-4 from Mus musculus (Mouse).